The sequence spans 860 residues: Leucine--tRNA ligase (860 aa).

The 'HIGH' region signature appears at P42–H52. The 'KMSKS' region motif lies at K619–S623. K622 lines the ATP pocket.

The protein belongs to the class-I aminoacyl-tRNA synthetase family.

It localises to the cytoplasm. The catalysed reaction is tRNA(Leu) + L-leucine + ATP = L-leucyl-tRNA(Leu) + AMP + diphosphate. In Sodalis glossinidius (strain morsitans), this protein is Leucine--tRNA ligase.